Reading from the N-terminus, the 401-residue chain is Glucose/mannose transporter GlcP (401 aa).

12 consecutive transmembrane segments (helical) span residues 11 to 31 (AFFFTVGIIHISTGSLTPFLL), 43 to 63 (VIIFFQFTGFLSGVLIAPLMI), 78 to 98 (IMLVALSIFFLTKDWYYIIVM), 99 to 119 (AFLLGYGAGTLETTVGSFVIA), 132 to 152 (EVLFGLGALSFPLLINSFIDI), 156 to 176 (FLPYYCIFTFLFVLFVGWLIF), 212 to 232 (LGFFVFFAFLYAGIETNFANF), 247 to 267 (LISVSFFWVGIIIGRILIGFV), 278 to 298 (LFSCSCLIVLLIAFSYISNPI), 306 to 326 (LIGLSIAGIFPIALTLASIII), 336 to 356 (LFIASASFGGAIISFLIGWSL), and 360 to 380 (TILLTMGIFTTMAVILVGISV).

The protein belongs to the major facilitator superfamily.

It is found in the cell membrane. Can transport glucose, mannose, 2-deoxyglucose and methyl alpha-glucoside, but not galactose. The chain is Glucose/mannose transporter GlcP (glcP) from Bacillus subtilis (strain 168).